We begin with the raw amino-acid sequence, 29 residues long: Trypsin inhibitor 2 (29 aa).

Intrachain disulfides connect cysteine 3/cysteine 20, cysteine 10/cysteine 22, and cysteine 16/cysteine 28.

The protein belongs to the protease inhibitor I7 (squash-type serine protease inhibitor) family.

The protein localises to the secreted. Functionally, inhibits trypsin. The chain is Trypsin inhibitor 2 from Bryonia dioica (Red bryony).